A 287-amino-acid chain; its full sequence is ATP synthase gamma chain (287 aa).

It belongs to the ATPase gamma chain family. In terms of assembly, F-type ATPases have 2 components, CF(1) - the catalytic core - and CF(0) - the membrane proton channel. CF(1) has five subunits: alpha(3), beta(3), gamma(1), delta(1), epsilon(1). CF(0) has three main subunits: a, b and c.

The protein resides in the cell inner membrane. In terms of biological role, produces ATP from ADP in the presence of a proton gradient across the membrane. The gamma chain is believed to be important in regulating ATPase activity and the flow of protons through the CF(0) complex. This Baumannia cicadellinicola subsp. Homalodisca coagulata protein is ATP synthase gamma chain.